Here is a 320-residue protein sequence, read N- to C-terminus: Biotin synthase (320 aa).

In terms of domain architecture, Radical SAM core spans 45–274; the sequence is NDLQKASLLS…DSRIRLSAGR (230 aa). Cysteine 60, cysteine 64, and cysteine 67 together coordinate [4Fe-4S] cluster. 4 residues coordinate [2Fe-2S] cluster: cysteine 105, cysteine 137, cysteine 197, and arginine 269.

Belongs to the radical SAM superfamily. Biotin synthase family. In terms of assembly, homodimer. [4Fe-4S] cluster serves as cofactor. Requires [2Fe-2S] cluster as cofactor.

The enzyme catalyses (4R,5S)-dethiobiotin + (sulfur carrier)-SH + 2 reduced [2Fe-2S]-[ferredoxin] + 2 S-adenosyl-L-methionine = (sulfur carrier)-H + biotin + 2 5'-deoxyadenosine + 2 L-methionine + 2 oxidized [2Fe-2S]-[ferredoxin]. It participates in cofactor biosynthesis; biotin biosynthesis; biotin from 7,8-diaminononanoate: step 2/2. Its function is as follows. Catalyzes the conversion of dethiobiotin (DTB) to biotin by the insertion of a sulfur atom into dethiobiotin via a radical-based mechanism. The protein is Biotin synthase of Beijerinckia indica subsp. indica (strain ATCC 9039 / DSM 1715 / NCIMB 8712).